A 274-amino-acid chain; its full sequence is Type II restriction enzyme HgiEI (274 aa).

It belongs to the TdeIII type II restriction endonuclease family.

It carries out the reaction Endonucleolytic cleavage of DNA to give specific double-stranded fragments with terminal 5'-phosphates.. A P subtype restriction enzyme that recognizes the double-stranded sequence 5'-GGWCC-3' and cleaves after G-1. This system is more active than isoschizomeric RM.HgiBI. This chain is Type II restriction enzyme HgiEI, found in Herpetosiphon aurantiacus (Herpetosiphon giganteus).